A 181-amino-acid polypeptide reads, in one-letter code: Aminoglycoside 2'-N-acetyltransferase (181 aa).

The region spanning 11–162 is the N-acetyltransferase domain; it reads VHTADLDSET…DGTVFVLPID (152 aa). Substrate contacts are provided by residues Asp35 and 82–83; that span reads EG. CoA-binding positions include 84 to 86 and 91 to 96; these read VAV and RGQRLV. Residues Ser117 and 151-152 contribute to the substrate site; that span reads DD.

Belongs to the AAC(2')-I acetyltransferase family. In terms of assembly, homodimer.

Its function is as follows. Catalyzes the coenzyme A-dependent acetylation of the 2' hydroxyl or amino group of a broad spectrum of aminoglycosides. It confers resistance to aminoglycosides. The protein is Aminoglycoside 2'-N-acetyltransferase (aac) of Mycobacterium bovis (strain ATCC BAA-935 / AF2122/97).